The primary structure comprises 113 residues: Hydrogenase maturation factor HybF (113 aa).

H2 and E3 together coordinate Ni(2+). Residues C73, C76, C89, and C92 each coordinate Zn(2+).

Belongs to the HypA/HybF family. HybF subfamily.

Functionally, involved in the maturation of [NiFe] hydrogenases. Required for nickel insertion into the metal center of the hydrogenase. In Proteus vulgaris, this protein is Hydrogenase maturation factor HybF.